A 446-amino-acid polypeptide reads, in one-letter code: Iron-sulfur cluster assembly SufBD family protein PH1385 (446 aa).

It belongs to the iron-sulfur cluster assembly SufBD family.

In Pyrococcus horikoshii (strain ATCC 700860 / DSM 12428 / JCM 9974 / NBRC 100139 / OT-3), this protein is Iron-sulfur cluster assembly SufBD family protein PH1385.